The sequence spans 177 residues: Adenine phosphoribosyltransferase (177 aa).

It belongs to the purine/pyrimidine phosphoribosyltransferase family. As to quaternary structure, homodimer.

The protein localises to the cytoplasm. It catalyses the reaction AMP + diphosphate = 5-phospho-alpha-D-ribose 1-diphosphate + adenine. The protein operates within purine metabolism; AMP biosynthesis via salvage pathway; AMP from adenine: step 1/1. In terms of biological role, catalyzes a salvage reaction resulting in the formation of AMP, that is energically less costly than de novo synthesis. The sequence is that of Adenine phosphoribosyltransferase from Mycoplasma pneumoniae (strain ATCC 29342 / M129 / Subtype 1) (Mycoplasmoides pneumoniae).